Reading from the N-terminus, the 189-residue chain is MAFSNALVLCFLLAIINMALPSLATVYTVGDTSGWVIGGDYSTWASDKTFAVGDSLVFNYGAGAHTVDEVKESDYKSCTSGNSISTDSTGATTIPLKKAGKHYFICGVPGHSTGGMKLSIKVKASSGSSAAPSATPSSSGKGSPSSDDTPAATTTTTTPTKQNESSATSLSPIVALFFTVSWICSYVLV.

Residues 1-24 form the signal peptide; that stretch reads MAFSNALVLCFLLAIINMALPSLA. One can recognise a Phytocyanin domain in the interval 25 to 124; it reads TVYTVGDTSG…GMKLSIKVKA (100 aa). 3 residues coordinate Cu cation: H65, C106, and H111. C78 and C106 are disulfide-bonded. The segment covering 127-160 has biased composition (low complexity); that stretch reads GSSAAPSATPSSSGKGSPSSDDTPAATTTTTTPT. Positions 127-165 are disordered; it reads GSSAAPSATPSSSGKGSPSSDDTPAATTTTTTPTKQNES. N-linked (GlcNAc...) asparagine glycosylation occurs at N163.

The chain is Blue copper protein from Pisum sativum (Garden pea).